We begin with the raw amino-acid sequence, 304 residues long: Undecaprenyl-diphosphatase (304 aa).

Helical transmembrane passes span 5-25, 47-67, 72-92, 111-131, 137-157, 209-231, 248-268, and 283-303; these read FLFILKALIIAIVEGLTEFVP, GFPEMYEVVIQLGAILAVVVL, ISSSVVEFLSYIFSFIGLKTS, FGINVIIGTIPAAILGLLFHD, LFSTKTVAIGFIVGGILLIVI, ISGLSTTVATEFTFFLAIPAMVG, TNWISLILGFIVAFIVSLVVI, and FAIYRVFAGIVLAILIFTKVI.

The protein belongs to the UppP family.

It localises to the cell membrane. It carries out the reaction di-trans,octa-cis-undecaprenyl diphosphate + H2O = di-trans,octa-cis-undecaprenyl phosphate + phosphate + H(+). Catalyzes the dephosphorylation of undecaprenyl diphosphate (UPP). Confers resistance to bacitracin. The polypeptide is Undecaprenyl-diphosphatase (Clostridium perfringens (strain 13 / Type A)).